The primary structure comprises 209 residues: Uracil phosphoribosyltransferase (209 aa).

Residues arginine 79, arginine 104, and 131-139 contribute to the 5-phospho-alpha-D-ribose 1-diphosphate site; that span reads DPMLATGGS. Residues isoleucine 194 and 199–201 contribute to the uracil site; that span reads GDA. Aspartate 200 contacts 5-phospho-alpha-D-ribose 1-diphosphate.

The protein belongs to the UPRTase family. Requires Mg(2+) as cofactor.

The catalysed reaction is UMP + diphosphate = 5-phospho-alpha-D-ribose 1-diphosphate + uracil. It functions in the pathway pyrimidine metabolism; UMP biosynthesis via salvage pathway; UMP from uracil: step 1/1. With respect to regulation, allosterically activated by GTP. Functionally, catalyzes the conversion of uracil and 5-phospho-alpha-D-ribose 1-diphosphate (PRPP) to UMP and diphosphate. The polypeptide is Uracil phosphoribosyltransferase (Brevibacillus brevis (strain 47 / JCM 6285 / NBRC 100599)).